We begin with the raw amino-acid sequence, 379 residues long: Glutamate 5-kinase (379 aa).

Residue K8 participates in ATP binding. 3 residues coordinate substrate: S49, D136, and N148. Residues 168–169 (TD) and 211–217 (TGGMATK) each bind ATP. The PUA domain occupies 276–354 (MGKIYLDAGA…ERIASLLGYM (79 aa)).

Belongs to the glutamate 5-kinase family.

It localises to the cytoplasm. The enzyme catalyses L-glutamate + ATP = L-glutamyl 5-phosphate + ADP. The protein operates within amino-acid biosynthesis; L-proline biosynthesis; L-glutamate 5-semialdehyde from L-glutamate: step 1/2. Its function is as follows. Catalyzes the transfer of a phosphate group to glutamate to form L-glutamate 5-phosphate. The chain is Glutamate 5-kinase from Microcystis aeruginosa (strain NIES-843 / IAM M-2473).